We begin with the raw amino-acid sequence, 114 residues long: Large ribosomal subunit protein uL22 (114 aa).

The protein belongs to the universal ribosomal protein uL22 family. As to quaternary structure, part of the 50S ribosomal subunit.

This protein binds specifically to 23S rRNA; its binding is stimulated by other ribosomal proteins, e.g. L4, L17, and L20. It is important during the early stages of 50S assembly. It makes multiple contacts with different domains of the 23S rRNA in the assembled 50S subunit and ribosome. Functionally, the globular domain of the protein is located near the polypeptide exit tunnel on the outside of the subunit, while an extended beta-hairpin is found that lines the wall of the exit tunnel in the center of the 70S ribosome. This Ehrlichia ruminantium (strain Gardel) protein is Large ribosomal subunit protein uL22.